The sequence spans 585 residues: Putative ABC transporter ATP-binding protein MG187 (585 aa).

The region spanning Ile8–Leu468 is the ABC transporter domain. ATP is bound at residue Gly40 to Thr47.

The protein belongs to the ABC transporter superfamily.

The chain is Putative ABC transporter ATP-binding protein MG187 from Mycoplasma genitalium (strain ATCC 33530 / DSM 19775 / NCTC 10195 / G37) (Mycoplasmoides genitalium).